The sequence spans 144 residues: Large ribosomal subunit protein uL13 (144 aa).

The protein belongs to the universal ribosomal protein uL13 family. Part of the 50S ribosomal subunit.

This protein is one of the early assembly proteins of the 50S ribosomal subunit, although it is not seen to bind rRNA by itself. It is important during the early stages of 50S assembly. The sequence is that of Large ribosomal subunit protein uL13 from Mesomycoplasma hyopneumoniae (strain 7448) (Mycoplasma hyopneumoniae).